The chain runs to 479 residues: Poly(A) polymerase catalytic subunit (479 aa).

Catalysis depends on residues aspartate 202 and aspartate 204. Aspartate 202, aspartate 204, and aspartate 253 together coordinate Ca(2+).

It belongs to the poxviridae poly(A) polymerase catalytic subunit family. In terms of assembly, heterodimer of a large (catalytic) subunit and a small (regulatory) subunit.

It carries out the reaction RNA(n) + ATP = RNA(n)-3'-adenine ribonucleotide + diphosphate. In terms of biological role, polymerase that creates the 3'-poly(A) tail of mRNA's. The chain is Poly(A) polymerase catalytic subunit (OPG063) from Bos taurus (Bovine).